Here is a 366-residue protein sequence, read N- to C-terminus: Histidinol-phosphate aminotransferase 2 (366 aa).

Residues 1–11 (MQVKDQLSSLQ) are compositionally biased toward polar residues. The disordered stretch occupies residues 1–21 (MQVKDQLSSLQPYKPGKSPEQ). Lysine 222 bears the N6-(pyridoxal phosphate)lysine mark.

This sequence belongs to the class-II pyridoxal-phosphate-dependent aminotransferase family. Histidinol-phosphate aminotransferase subfamily. Homodimer. Pyridoxal 5'-phosphate is required as a cofactor.

The enzyme catalyses L-histidinol phosphate + 2-oxoglutarate = 3-(imidazol-4-yl)-2-oxopropyl phosphate + L-glutamate. It functions in the pathway amino-acid biosynthesis; L-histidine biosynthesis; L-histidine from 5-phospho-alpha-D-ribose 1-diphosphate: step 7/9. This chain is Histidinol-phosphate aminotransferase 2 (hisC2), found in Bacillus cereus (strain ATCC 14579 / DSM 31 / CCUG 7414 / JCM 2152 / NBRC 15305 / NCIMB 9373 / NCTC 2599 / NRRL B-3711).